Here is a 291-residue protein sequence, read N- to C-terminus: Bifunctional protein FolD (291 aa).

NADP(+)-binding positions include 167-169 (GRS), serine 192, and isoleucine 233.

Belongs to the tetrahydrofolate dehydrogenase/cyclohydrolase family. As to quaternary structure, homodimer.

The catalysed reaction is (6R)-5,10-methylene-5,6,7,8-tetrahydrofolate + NADP(+) = (6R)-5,10-methenyltetrahydrofolate + NADPH. The enzyme catalyses (6R)-5,10-methenyltetrahydrofolate + H2O = (6R)-10-formyltetrahydrofolate + H(+). Its pathway is one-carbon metabolism; tetrahydrofolate interconversion. Its function is as follows. Catalyzes the oxidation of 5,10-methylenetetrahydrofolate to 5,10-methenyltetrahydrofolate and then the hydrolysis of 5,10-methenyltetrahydrofolate to 10-formyltetrahydrofolate. The polypeptide is Bifunctional protein FolD (Dichelobacter nodosus (strain VCS1703A)).